Reading from the N-terminus, the 431-residue chain is Ribosome assembly protein SQT1 (431 aa).

WD repeat units follow at residues 63-102 (KHTD…PKFA), 107-146 (GYGE…AQWK), 149-192 (SQMQ…GSLE), 199-243 (VHQQ…QLFK), 309-348 (ELDA…VRHK), and 350-387 (VLED…EKFV).

As to quaternary structure, interacts strongly with QSR1. Part of an oligomeric protein complex that is loosely associated with ribosomes.

In terms of biological role, may be involved in the late step of 60S ribosomal subunit assembly or modification in the cytoplasm. The polypeptide is Ribosome assembly protein SQT1 (SQT1) (Saccharomyces cerevisiae (strain ATCC 204508 / S288c) (Baker's yeast)).